A 255-amino-acid chain; its full sequence is UPF0246 protein Caul_4480 (255 aa).

This sequence belongs to the UPF0246 family.

This chain is UPF0246 protein Caul_4480, found in Caulobacter sp. (strain K31).